A 269-amino-acid chain; its full sequence is 4-hydroxy-tetrahydrodipicolinate reductase (269 aa).

NAD(+) is bound by residues 11-16 (GASGRM) and Glu37. Residue Arg38 coordinates NADP(+). NAD(+)-binding positions include 101 to 103 (GTT) and 125 to 128 (AGNM). His158 functions as the Proton donor/acceptor in the catalytic mechanism. His159 contacts (S)-2,3,4,5-tetrahydrodipicolinate. The Proton donor role is filled by Lys162. Residue 168–169 (GT) participates in (S)-2,3,4,5-tetrahydrodipicolinate binding.

The protein belongs to the DapB family.

Its subcellular location is the cytoplasm. It catalyses the reaction (S)-2,3,4,5-tetrahydrodipicolinate + NAD(+) + H2O = (2S,4S)-4-hydroxy-2,3,4,5-tetrahydrodipicolinate + NADH + H(+). The catalysed reaction is (S)-2,3,4,5-tetrahydrodipicolinate + NADP(+) + H2O = (2S,4S)-4-hydroxy-2,3,4,5-tetrahydrodipicolinate + NADPH + H(+). It participates in amino-acid biosynthesis; L-lysine biosynthesis via DAP pathway; (S)-tetrahydrodipicolinate from L-aspartate: step 4/4. Its function is as follows. Catalyzes the conversion of 4-hydroxy-tetrahydrodipicolinate (HTPA) to tetrahydrodipicolinate. The chain is 4-hydroxy-tetrahydrodipicolinate reductase from Ruegeria pomeroyi (strain ATCC 700808 / DSM 15171 / DSS-3) (Silicibacter pomeroyi).